The following is a 68-amino-acid chain: ATP synthase subunit c (68 aa).

2 helical membrane passes run 4–24 and 45–65; these read IAAA…NGLI and IMFI…VIAF.

It belongs to the ATPase C chain family. In terms of assembly, F-type ATPases have 2 components, F(1) - the catalytic core - and F(0) - the membrane proton channel. F(1) has five subunits: alpha(3), beta(3), gamma(1), delta(1), epsilon(1). F(0) has three main subunits: a(1), b(2) and c(10-14). The alpha and beta chains form an alternating ring which encloses part of the gamma chain. F(1) is attached to F(0) by a central stalk formed by the gamma and epsilon chains, while a peripheral stalk is formed by the delta and b chains.

It is found in the cell membrane. In terms of biological role, f(1)F(0) ATP synthase produces ATP from ADP in the presence of a proton or sodium gradient. F-type ATPases consist of two structural domains, F(1) containing the extramembraneous catalytic core and F(0) containing the membrane proton channel, linked together by a central stalk and a peripheral stalk. During catalysis, ATP synthesis in the catalytic domain of F(1) is coupled via a rotary mechanism of the central stalk subunits to proton translocation. Its function is as follows. Key component of the F(0) channel; it plays a direct role in translocation across the membrane. A homomeric c-ring of between 10-14 subunits forms the central stalk rotor element with the F(1) delta and epsilon subunits. The protein is ATP synthase subunit c of Staphylococcus saprophyticus subsp. saprophyticus (strain ATCC 15305 / DSM 20229 / NCIMB 8711 / NCTC 7292 / S-41).